Consider the following 374-residue polypeptide: Chaperone protein DnaJ (374 aa).

The 65-residue stretch at 5 to 69 folds into the J domain; sequence DYYEVLGVSK…DKKAKYDQFG (65 aa). The CR-type zinc-finger motif lies at 141-223; it reads GVNKKTILNL…CHGKGVESKR (83 aa). Residues cysteine 154, cysteine 157, cysteine 171, cysteine 174, cysteine 197, cysteine 200, cysteine 211, and cysteine 214 each coordinate Zn(2+). 4 CXXCXGXG motif repeats span residues 154 to 161, 171 to 178, 197 to 204, and 211 to 218; these read CTKCDGVG, CTKCNGAG, CDKCNGVG, and CKNCHGKG.

This sequence belongs to the DnaJ family. In terms of assembly, homodimer. Zn(2+) is required as a cofactor.

It is found in the cytoplasm. Participates actively in the response to hyperosmotic and heat shock by preventing the aggregation of stress-denatured proteins and by disaggregating proteins, also in an autonomous, DnaK-independent fashion. Unfolded proteins bind initially to DnaJ; upon interaction with the DnaJ-bound protein, DnaK hydrolyzes its bound ATP, resulting in the formation of a stable complex. GrpE releases ADP from DnaK; ATP binding to DnaK triggers the release of the substrate protein, thus completing the reaction cycle. Several rounds of ATP-dependent interactions between DnaJ, DnaK and GrpE are required for fully efficient folding. Also involved, together with DnaK and GrpE, in the DNA replication of plasmids through activation of initiation proteins. In Mesoplasma florum (strain ATCC 33453 / NBRC 100688 / NCTC 11704 / L1) (Acholeplasma florum), this protein is Chaperone protein DnaJ.